Reading from the N-terminus, the 402-residue chain is Multidrug resistance protein MdtH (402 aa).

11 consecutive transmembrane segments (helical) span residues 13 to 33 (YFLL…FPLI), 34 to 54 (SIRF…ALGL), 99 to 116 (PWVL…GTLF), 139 to 159 (LLMM…SWLL), 165 to 185 (LVCG…AWLL), 214 to 234 (VLTL…LPVM), 243 to 263 (AAVK…LYPL), 277 to 297 (LMAG…ASNL), 300 to 320 (LFTL…ARET), 340 to 360 (LGLA…FDAG), and 368 to 388 (LPWA…WWQF).

Belongs to the major facilitator superfamily. DHA1 family. MdtH (TC 2.A.1.2.21) subfamily.

It is found in the cell inner membrane. The protein is Multidrug resistance protein MdtH of Cronobacter sakazakii (strain ATCC BAA-894) (Enterobacter sakazakii).